The chain runs to 258 residues: Indole-3-glycerol phosphate synthase (258 aa).

It belongs to the TrpC family.

The enzyme catalyses 1-(2-carboxyphenylamino)-1-deoxy-D-ribulose 5-phosphate + H(+) = (1S,2R)-1-C-(indol-3-yl)glycerol 3-phosphate + CO2 + H2O. It functions in the pathway amino-acid biosynthesis; L-tryptophan biosynthesis; L-tryptophan from chorismate: step 4/5. The protein is Indole-3-glycerol phosphate synthase of Nautilia profundicola (strain ATCC BAA-1463 / DSM 18972 / AmH).